Consider the following 417-residue polypeptide: UDP-N-acetylglucosamine 1-carboxyvinyltransferase (417 aa).

Phosphoenolpyruvate is bound at residue 22–23; the sequence is KN. R93 is a binding site for UDP-N-acetyl-alpha-D-glucosamine. The active-site Proton donor is the C117. C117 is subject to 2-(S-cysteinyl)pyruvic acid O-phosphothioketal. Residues 122-126, D304, and I326 each bind UDP-N-acetyl-alpha-D-glucosamine; that span reads RPVDQ.

The protein belongs to the EPSP synthase family. MurA subfamily.

It is found in the cytoplasm. It catalyses the reaction phosphoenolpyruvate + UDP-N-acetyl-alpha-D-glucosamine = UDP-N-acetyl-3-O-(1-carboxyvinyl)-alpha-D-glucosamine + phosphate. Its pathway is cell wall biogenesis; peptidoglycan biosynthesis. Functionally, cell wall formation. Adds enolpyruvyl to UDP-N-acetylglucosamine. The protein is UDP-N-acetylglucosamine 1-carboxyvinyltransferase of Neisseria meningitidis serogroup C (strain 053442).